The chain runs to 764 residues: uncharacterized protein (764 aa).

The Lumenal portion of the chain corresponds to 1-646; the sequence is MKEENGFAGF…LTKLYTFPFT (646 aa). The disordered stretch occupies residues 22-173; sequence LNDTAPTKSQ…SAITAPSRKV (152 aa). N-linked (GlcNAc...) asparagine glycosylation occurs at Asn23. 2 stretches are compositionally biased toward polar residues: residues 25-41 and 61-82; these read TAPT…NNEG and SEAS…QSPS. At Ser80 the chain carries Phosphoserine. Over residues 98–113 the composition is skewed to acidic residues; that stretch reads ENQENEADEAENEETS. N-linked (GlcNAc...) asparagine glycosylation is present at Asn118. Over residues 118 to 145 the composition is skewed to basic and acidic residues; that stretch reads NHTENTEEIAEESRPLERTHSGSNHHEA. Polar residues predominate over residues 158 to 173; it reads NTLSQGSAITAPSRKV. In terms of domain architecture, GRAM spans 197-264; sequence RDFHRIFKVL…TEIVSVEKKS (68 aa). 2 N-linked (GlcNAc...) asparagine glycosylation sites follow: Asn240 and Asn330. The disordered stretch occupies residues 320–406; sequence ASGNHHSGSS…DGNSVKKMNE (87 aa). Residues 321 to 330 are compositionally biased toward low complexity; it reads SGNHHSGSSN. Positions 331-340 are enriched in polar residues; that stretch reads QSINADSSAG. The segment covering 352–371 has biased composition (acidic residues); that stretch reads ANDESSEDDDEDNNTDEANE. 2 N-linked (GlcNAc...) asparagine glycosylation sites follow: Asn364 and Asn376. Residues 389-399 are compositionally biased toward polar residues; sequence HSDNVVLSDGN. Positions 432-598 constitute a VASt domain; it reads LAHVLCSDVV…AFENYKVSPK (167 aa). 2 N-linked (GlcNAc...) asparagine glycosylation sites follow: Asn442 and Asn554. Residues 598–613 are compositionally biased toward basic residues; it reads KGRRKKITKHTKKKNK. Residues 598 to 626 form a disordered region; sequence KGRRKKITKHTKKKNKHASETSVAPEKVD. The N-linked (GlcNAc...) asparagine glycan is linked to Asn627. A helical membrane pass occupies residues 647-667; it reads IITWLMHPTHLLLVVMFSMLV. Over 668–764 the chain is Cytoplasmic; the sequence is LQWWYMQQIL…LRKLEASGYI (97 aa).

It belongs to the YSP2 family.

It localises to the membrane. This is an uncharacterized protein from Schizosaccharomyces pombe (strain 972 / ATCC 24843) (Fission yeast).